Reading from the N-terminus, the 173-residue chain is Bifunctional protein PyrR (173 aa).

The PRPP-binding motif lies at 93–105; that stretch reads VILVDDVLYTGRT.

Belongs to the purine/pyrimidine phosphoribosyltransferase family. PyrR subfamily. In terms of assembly, homodimer and homohexamer; in equilibrium.

The catalysed reaction is UMP + diphosphate = 5-phospho-alpha-D-ribose 1-diphosphate + uracil. In terms of biological role, regulates transcriptional attenuation of the pyrimidine nucleotide (pyr) operon by binding in a uridine-dependent manner to specific sites on pyr mRNA. This disrupts an antiterminator hairpin in the RNA and favors formation of a downstream transcription terminator, leading to a reduced expression of downstream genes. Functionally, also displays a weak uracil phosphoribosyltransferase activity which is not physiologically significant. This chain is Bifunctional protein PyrR, found in Streptococcus suis (strain 05ZYH33).